We begin with the raw amino-acid sequence, 921 residues long: Inner nuclear membrane protein Man1 (921 aa).

In terms of domain architecture, LEM spans 7 to 51 (AAAPQQLSDEELFSQLRRYGLSPGPVTESTRPVYLKKLKKLREEE). At Ser-28 the chain carries Phosphoserine. 3 disordered regions span residues 47 to 97 (LREE…AYLR), 136 to 357 (SSDE…GGCG), and 374 to 395 (LAPLLSPPSPDGDSTLESPTGP). 2 stretches are compositionally biased toward low complexity: residues 53–62 (QQQQQQQQQQ) and 72–85 (TRNSNNNNTATAMG). 3 positions are modified to phosphoserine: Ser-136, Ser-137, and Ser-140. Residues 217–237 (AAEDADEELADGEDRDPEAEE) are compositionally biased toward acidic residues. 3 positions are modified to phosphoserine: Ser-261, Ser-263, and Ser-287. The segment covering 263–275 (SEEEEEEGEEDGD) has biased composition (acidic residues). A compositionally biased stretch (polar residues) spans 308-317 (SGGSRQETSV). The span at 348-357 (PGGGGGGGCG) shows a compositional bias: gly residues. Ser-412 is subject to Phosphoserine. The next 2 helical transmembrane spans lie at 486-506 (MFLLTAACLFFLILGLTYLGM) and 637-657 (AFITVTHRLLLLCLGVVLVCV). The segment at 709 to 921 (VRDSLIQPQD…TGLANSQGSS (213 aa)) is interaction with SMAD1, SMAD2, SMAD3 and SMAD5. Residues 717-736 (QDRKKMKKVWDRAVDFLAAN) mediate DNA binding. Residue Ser-787 is modified to Phosphoserine. Thr-893 carries the post-translational modification Phosphothreonine. Position 921 is a phosphoserine (Ser-921).

As to quaternary structure, interacts with SMAD1, SMAD2, SMAD3 and SMAD5. Binds to both phosphorylated and unphosphorylated R-SMADS.

It localises to the nucleus inner membrane. In terms of biological role, can function as a specific repressor of TGF-beta, activin, and BMP signaling through its interaction with the R-SMAD proteins. Antagonizes TGF-beta-induced cell proliferation arrest. This chain is Inner nuclear membrane protein Man1 (Lemd3), found in Mus musculus (Mouse).